The sequence spans 238 residues: Flagellar L-ring protein (238 aa).

A signal peptide spans 1–16; that stretch reads MNKAILAVAMVLLLAG. A lipid anchor (N-palmitoyl cysteine) is attached at C17. The S-diacylglycerol cysteine moiety is linked to residue C17.

This sequence belongs to the FlgH family. In terms of assembly, the basal body constitutes a major portion of the flagellar organelle and consists of four rings (L,P,S, and M) mounted on a central rod.

The protein localises to the cell outer membrane. Its subcellular location is the bacterial flagellum basal body. In terms of biological role, assembles around the rod to form the L-ring and probably protects the motor/basal body from shearing forces during rotation. The chain is Flagellar L-ring protein from Brucella canis (strain ATCC 23365 / NCTC 10854 / RM-666).